The sequence spans 537 residues: Mitochondrial distribution and morphology protein 34 (537 aa).

The SMP-LTD domain occupies 1 to 195; it reads MAFNFNWSPL…LPAIIHRLSL (195 aa). Disordered regions lie at residues 320-339, 348-403, 421-493, and 516-537; these read YTFSDNGSQDQGSLPSRPSL, GLSL…IMPH, GRSP…DTSS, and KNGNPTFWDDQDDTPPPAYEAR. Over residues 355-371 the composition is skewed to basic residues; it reads RHSKAGRKKKTRVVNLR. Positions 378–391 are enriched in acidic residues; sequence ANSEEEEDTPETDS. Over residues 425 to 441 the composition is skewed to polar residues; it reads DLQQQPRRPSFRAQATN.

This sequence belongs to the MDM34 family. As to quaternary structure, component of the ER-mitochondria encounter structure (ERMES) or MDM complex, composed of MMM1, MDM10, MDM12 and MDM34.

Its subcellular location is the mitochondrion outer membrane. In terms of biological role, component of the ERMES/MDM complex, which serves as a molecular tether to connect the endoplasmic reticulum (ER) and mitochondria. Components of this complex are involved in the control of mitochondrial shape and protein biogenesis, and function in nonvesicular lipid trafficking between the ER and mitochondria. MDM34 is required for the interaction of the ER-resident membrane protein MMM1 and the outer mitochondrial membrane-resident beta-barrel protein MDM10. The protein is Mitochondrial distribution and morphology protein 34 of Chaetomium globosum (strain ATCC 6205 / CBS 148.51 / DSM 1962 / NBRC 6347 / NRRL 1970) (Soil fungus).